Here is a 957-residue protein sequence, read N- to C-terminus: Sorting nexin-13 (957 aa).

The PXA domain occupies 97-284 (ANIIDEPLQQ…YVIWMIRDSN (188 aa)). An RGS domain is found at 373 to 511 (PLDSILVDNV…SFRQNALYVR (139 aa)). Residues 559–680 (VQLHAYISDT…DFLENKAYSK (122 aa)) enclose the PX domain. A 1,2-diacyl-sn-glycero-3-phospho-(1D-myo-inositol-3-phosphate) contacts are provided by Arg601, Ser603, Lys628, and Arg642.

Belongs to the sorting nexin family.

It is found in the early endosome membrane. In terms of biological role, may be involved in several stages of intracellular trafficking. Acts as a GAP for Galphas. May play a role in endosome homeostasis. This Mus musculus (Mouse) protein is Sorting nexin-13 (Snx13).